Reading from the N-terminus, the 927-residue chain is DNA mismatch repair protein MutS (927 aa).

Positions 44–80 (DESLKRPRNRHKPTSVPSIPLDSESQEQLETADNDND) are disordered. A compositionally biased stretch (acidic residues) spans 67-79 (ESQEQLETADNDN). 725–732 (GPNASGKS) contacts ATP.

This sequence belongs to the DNA mismatch repair MutS family.

Its function is as follows. This protein is involved in the repair of mismatches in DNA. It is possible that it carries out the mismatch recognition step. This protein has a weak ATPase activity. This Prochlorococcus marinus (strain MIT 9303) protein is DNA mismatch repair protein MutS.